We begin with the raw amino-acid sequence, 298 residues long: Protease HtpX (298 aa).

2 helical membrane-spanning segments follow: residues 4–24 and 38–58; these read IGLF…TMNL and LGNL…VSLA. His-145 is a binding site for Zn(2+). Glu-146 is an active-site residue. His-149 lines the Zn(2+) pocket. 2 helical membrane passes run 160 to 180 and 194 to 214; these read LLQG…AYVV and ITFI…ASMI. Glu-223 serves as a coordination point for Zn(2+).

This sequence belongs to the peptidase M48B family. It depends on Zn(2+) as a cofactor.

It localises to the cell inner membrane. This Hydrogenovibrio crunogenus (strain DSM 25203 / XCL-2) (Thiomicrospira crunogena) protein is Protease HtpX.